Consider the following 229-residue polypeptide: Purine nucleoside phosphorylase BB_0467 (229 aa).

Residues His-55, Cys-91, and His-108 each contribute to the Zn(2+) site.

It belongs to the purine nucleoside phosphorylase YfiH/LACC1 family. In terms of assembly, homodimer. Cu(2+) serves as cofactor. Zn(2+) is required as a cofactor.

The catalysed reaction is adenosine + phosphate = alpha-D-ribose 1-phosphate + adenine. The enzyme catalyses S-methyl-5'-thioadenosine + phosphate = 5-(methylsulfanyl)-alpha-D-ribose 1-phosphate + adenine. It catalyses the reaction inosine + phosphate = alpha-D-ribose 1-phosphate + hypoxanthine. It carries out the reaction adenosine + H2O + H(+) = inosine + NH4(+). Purine nucleoside enzyme that catalyzes the phosphorolysis of adenosine and inosine nucleosides, yielding D-ribose 1-phosphate and the respective free bases, adenine and hypoxanthine. Also catalyzes the phosphorolysis of S-methyl-5'-thioadenosine into adenine and S-methyl-5-thio-alpha-D-ribose 1-phosphate. Also has adenosine deaminase activity. This Borreliella burgdorferi (strain ATCC 35210 / DSM 4680 / CIP 102532 / B31) (Borrelia burgdorferi) protein is Purine nucleoside phosphorylase BB_0467.